We begin with the raw amino-acid sequence, 473 residues long: Trehalose-6-phosphate synthase (473 aa).

Residue arginine 10 participates in D-glucose 6-phosphate binding. 21 to 22 (GG) serves as a coordination point for UDP-alpha-D-glucose. 2 residues coordinate D-glucose 6-phosphate: tyrosine 76 and aspartate 130. 2 residues coordinate UDP-alpha-D-glucose: arginine 262 and lysine 267. A D-glucose 6-phosphate-binding site is contributed by arginine 300. Residues phenylalanine 339 and 365–369 (LVAKE) each bind UDP-alpha-D-glucose. The tract at residues 454-473 (TPRSPERQQQNNVATFPKLA) is disordered.

The protein belongs to the glycosyltransferase 20 family. As to quaternary structure, homotetramer.

It carries out the reaction D-glucose 6-phosphate + UDP-alpha-D-glucose = alpha,alpha-trehalose 6-phosphate + UDP + H(+). The protein operates within glycan biosynthesis; trehalose biosynthesis. Probably involved in the osmoprotection via the biosynthesis of trehalose. Catalyzes the transfer of glucose from UDP-alpha-D-glucose (UDP-Glc) to D-glucose 6-phosphate (Glc-6-P) to form trehalose-6-phosphate. Acts with retention of the anomeric configuration of the UDP-sugar donor. The protein is Trehalose-6-phosphate synthase of Salmonella choleraesuis (strain SC-B67).